The primary structure comprises 592 residues: Threonine--tRNA ligase (592 aa).

The interval 193 to 488 (DHRKLGPALG…LIEHYGGAFP (296 aa)) is catalytic. Zn(2+) is bound by residues C284, H335, and H465.

The protein belongs to the class-II aminoacyl-tRNA synthetase family. Homodimer. It depends on Zn(2+) as a cofactor.

The protein localises to the cytoplasm. It catalyses the reaction tRNA(Thr) + L-threonine + ATP = L-threonyl-tRNA(Thr) + AMP + diphosphate + H(+). Functionally, catalyzes the attachment of threonine to tRNA(Thr) in a two-step reaction: L-threonine is first activated by ATP to form Thr-AMP and then transferred to the acceptor end of tRNA(Thr). Also edits incorrectly charged L-seryl-tRNA(Thr). The protein is Threonine--tRNA ligase of Treponema pallidum (strain Nichols).